Here is a 229-residue protein sequence, read N- to C-terminus: Zinc finger matrin-type protein 4 (229 aa).

Matrin-type zinc fingers lie at residues 14–44 (SYCKVCSAQLISESQRVAHYESRKHASKVRL) and 72–106 (DKNKCCTLCNMSFTSAVVADSHYQGKIHAKRLKLL). Residues 116–135 (TATPLSPLKPPRMDTAPVVA) form a disordered region. 2 consecutive Matrin-type zinc fingers follow at residues 145–175 (RYCGLCAAWFNNPLMAQQHYDGKKHKKNAAR) and 198–228 (YRCTICSVSLNSIEQYHAHLKGSKHQTNLKN).

Its subcellular location is the nucleus. In Homo sapiens (Human), this protein is Zinc finger matrin-type protein 4 (ZMAT4).